Here is a 434-residue protein sequence, read N- to C-terminus: MNLDSSASALSYQSGFGNEFASEALPGALPVGQNSPQKAPYGLYAELFSGTAFTMTRSEARRTWMYRIQPSAKHPAFAKLARQLAGGPLGEVTPNRLRWSPLQIPSEPTDFIDGLVAMVANSAAQKPAGISVYHYRANRSMERVFFNADGELLLVPELGRLRIVTELGMLDLEPLEIAVLPRGLKFRIELLDPQARGYVAENHGAPLRLPDLGPIGSNGLANPRDFLAPVAHYEDLRQPTTLVQKYLGELWGCELDHSPLNVVAWHGNNVPYKYDLRRFNTIGTVSFDHPDPSIFTVLTSPTSVPGLANLDFVIFPPRWMVAENTFRPPWFHRNLMNEFMGLIQGAYDAKAEGFLPGGASLHSCMSAHGPDGETCTKAINAQLQPAKIDNTMAFMFETSQVLRPSQFALECPELQNDYDACWASLPVTFNPNRR.

The active-site Proton acceptor is the His289. Fe cation-binding residues include His332 and Glu338. Residues Tyr347 and His368 each coordinate homogentisate. His368 serves as a coordination point for Fe cation.

The protein belongs to the homogentisate dioxygenase family. Hexamer; dimer of trimers. Fe cation is required as a cofactor.

The enzyme catalyses homogentisate + O2 = 4-maleylacetoacetate + H(+). The protein operates within amino-acid degradation; L-phenylalanine degradation; acetoacetate and fumarate from L-phenylalanine: step 4/6. In terms of biological role, involved in the catabolism of homogentisate (2,5-dihydroxyphenylacetate or 2,5-OH-PhAc), a central intermediate in the degradation of phenylalanine and tyrosine. Catalyzes the oxidative ring cleavage of the aromatic ring of homogentisate to yield maleylacetoacetate. This chain is Homogentisate 1,2-dioxygenase, found in Pseudomonas fluorescens (strain ATCC BAA-477 / NRRL B-23932 / Pf-5).